We begin with the raw amino-acid sequence, 691 residues long: Elongation factor G (691 aa).

Residues 8–282 (ERVRNIGIAA…AVIDYLPAPV (275 aa)) enclose the tr-type G domain. Residues 17–24 (AHIDAGKT), 81–85 (DTPGH), and 135–138 (NKMD) each bind GTP.

It belongs to the TRAFAC class translation factor GTPase superfamily. Classic translation factor GTPase family. EF-G/EF-2 subfamily.

It is found in the cytoplasm. Functionally, catalyzes the GTP-dependent ribosomal translocation step during translation elongation. During this step, the ribosome changes from the pre-translocational (PRE) to the post-translocational (POST) state as the newly formed A-site-bound peptidyl-tRNA and P-site-bound deacylated tRNA move to the P and E sites, respectively. Catalyzes the coordinated movement of the two tRNA molecules, the mRNA and conformational changes in the ribosome. The protein is Elongation factor G of Synechococcus sp. (strain CC9605).